Here is a 30-residue protein sequence, read N- to C-terminus: Kappa-sparatoxin-Hv1d (30 aa).

3 disulfide bridges follow: Cys3–Cys17, Cys10–Cys22, and Cys16–Cys26.

Expressed by the venom gland.

Its subcellular location is the secreted. In terms of biological role, inhibitor of voltage-gated potassium channels of the Kv4/KCND family. Blocks calcium channels (Cav). The chain is Kappa-sparatoxin-Hv1d from Heteropoda venatoria (Brown huntsman spider).